We begin with the raw amino-acid sequence, 214 residues long: Cytochrome b (214 aa).

4 consecutive transmembrane segments (helical) span residues 31–51 (FGSM…FLAI), 75–96 (WIMQ…YIHI), 111–131 (WLSG…GYVL), and 176–196 (FFAL…IHIL). The heme b site is built by His-81 and His-95. Heme b is bound by residues His-180 and His-194. His-199 contributes to the a ubiquinone binding site.

The protein belongs to the cytochrome b family. In terms of assembly, the cytochrome bc1 complex contains 3 respiratory subunits (MT-CYB, CYC1 and UQCRFS1), 2 core proteins (UQCRC1 and UQCRC2) and probably 6 low-molecular weight proteins. It depends on heme b as a cofactor.

Its subcellular location is the mitochondrion inner membrane. Functionally, component of the ubiquinol-cytochrome c reductase complex (complex III or cytochrome b-c1 complex) that is part of the mitochondrial respiratory chain. The b-c1 complex mediates electron transfer from ubiquinol to cytochrome c. Contributes to the generation of a proton gradient across the mitochondrial membrane that is then used for ATP synthesis. The sequence is that of Cytochrome b (MT-CYB) from Bothrops atrox (Barba amarilla).